Here is a 151-residue protein sequence, read N- to C-terminus: MTLRLDSLKSNKGARRRKLRKGRGIAAGQGASCGFGMRGQKSRSGRPTRPGFEGGQMPLYRRVPKLKHFPLVNPKHFTVLNVSALNDLKDGSTVNLDSLVKDGIVTSPKHPLKMLGNGELTAKKLTVQAAAFTSSALTKIEAAGGTCDILH.

Residues 1-57 are disordered; that stretch reads MTLRLDSLKSNKGARRRKLRKGRGIAAGQGASCGFGMRGQKSRSGRPTRPGFEGGQM. Basic residues predominate over residues 12–23; sequence KGARRRKLRKGR. Residues 25–37 are compositionally biased toward gly residues; that stretch reads IAAGQGASCGFGM.

This sequence belongs to the universal ribosomal protein uL15 family. Part of the 50S ribosomal subunit.

Its function is as follows. Binds to the 23S rRNA. This chain is Large ribosomal subunit protein uL15, found in Synechococcus sp. (strain CC9605).